The sequence spans 1242 residues: MILRPSATFAALSAHVLLRCLWMRVCEASGHFEMQVLSMQNVNGELQSGACCDGARDPAERSCAADQCDTFFRVCLKEYQSRVSSGGPCSYGSGSTPVIGGNTFSVKPLDQTNDKTRIVLPFSFAWPRSYTLIVEALDFNNDSSTGSINGQVIEKAVQSGMINPNRQWQVLKHNGPVAQFQYQIRVTCDEHYFGFGCNKFCRPRDDFFGHYTCDHNGNKTCLEGWAGPECNTAICKQGCSIEHGSCKVPGNCRCLYGWQGEYCDQCIPHPGCVHGTCIEPWQCLCDTNWGGQLCDKDLNTCGTLQPCLNGGTCSNTGPDKYHCACPDGYSGQNCERADNACLSEPCLNGGLCVESSLGFECQCAAGWTGPSCNINEDDCSPNPCNHSGVCVDLVDGFKCICPVQWTGKTCLIDANECEESPCVNAHSCRNLIGGYFCECLPGWTGQNCDINVNDCHGQCLNGGLCKDLVNGYRCVCAAGFAGDRCERDVDECASRPCLNGGRCQDTLNGFQCLCPPGFSGATCQLDLDYCESGPCQNGAQCFSLASDYYCKCPEDYEGKNCSQLKDHCLITPCQVIDSCTVAVVSNSTPGGLRLISSSVCGPHGRCRSHSHAGGHFSCDCQDGFTGTYCHENINDCESSPCLSGGTCIDKINAYQCICADGWEGPNCETNIDDCRTNPCRDRGVCRDLVNDFYCECENGWKGKTCHSRESQCDEDTCNNGGTCSDEGDSFKCLCSPGWEGATCNIAKNSSCLPNPCENGATCVVTGDGFTCVCKEGWEGPTCSQNSNDCNPQPCYNSGTCVDGDNWYRCECASGFAGPDCRININECQSSPCAFGSTCVDEINGYRCLCPPGRTGPRCQEVTGRPCVIGGRIAVDGAKWAEDCNTCYCHKGIVTCTKLFCGPKACRMLGSGRGDCPTGQLCVPVRDEQCFVKPCSSQGECWSAHRPAVRTHCQPDSHCANVTFTFNKDTMPQGVTVEQVCRELRHLYVTKNVTSEFSISVSCELSSAASNEIHVAIHVTENGIHGRVPVKEITDNIIDLVSKHSANSSVIGSIAEVRVQRKQPQNPNVDYMVPLLVSVVTAIWVLALASVFLWCIRHHRKQSSSATAINPTSPFSTPEENTANNAREHLNQIKNHIEKNASNGSLPGKELHCDDKNTVNAKIRTQFPESDASRRLQKTRFPHQPAYMLVDRDDRLSSNGTDIKKHPQWTNKRDNRDLESQHRVPDSQHRDSQHSLQKMEYIV.

Residues 1–28 (MILRPSATFAALSAHVLLRCLWMRVCEA) form the signal peptide. Topologically, residues 29 to 1070 (SGHFEMQVLS…KQPQNPNVDY (1042 aa)) are extracellular. N-linked (GlcNAc...) asparagine glycosylation occurs at asparagine 141. The region spanning 186–230 (VTCDEHYFGFGCNKFCRPRDDFFGHYTCDHNGNKTCLEGWAGPEC) is the DSL domain. 2 cysteine pairs are disulfide-bonded: cysteine 188–cysteine 197 and cysteine 201–cysteine 213. An N-linked (GlcNAc...) asparagine glycan is attached at asparagine 218. Cystine bridges form between cysteine 221–cysteine 230, cysteine 235–cysteine 246, cysteine 239–cysteine 252, cysteine 254–cysteine 263, cysteine 266–cysteine 277, cysteine 272–cysteine 283, cysteine 285–cysteine 294, cysteine 301–cysteine 313, cysteine 307–cysteine 323, cysteine 325–cysteine 334, cysteine 341–cysteine 352, cysteine 346–cysteine 361, cysteine 363–cysteine 372, cysteine 379–cysteine 390, cysteine 384–cysteine 399, cysteine 401–cysteine 410, cysteine 417–cysteine 428, cysteine 422–cysteine 437, cysteine 439–cysteine 448, cysteine 455–cysteine 465, cysteine 459–cysteine 474, cysteine 476–cysteine 485, cysteine 492–cysteine 503, cysteine 497–cysteine 512, cysteine 514–cysteine 523, cysteine 530–cysteine 541, cysteine 535–cysteine 550, cysteine 552–cysteine 561, cysteine 600–cysteine 618, cysteine 620–cysteine 629, cysteine 636–cysteine 647, cysteine 641–cysteine 656, cysteine 658–cysteine 667, cysteine 674–cysteine 685, cysteine 679–cysteine 694, cysteine 696–cysteine 705, cysteine 712–cysteine 723, cysteine 717–cysteine 732, and cysteine 734–cysteine 743. One can recognise an EGF-like 1 domain in the interval 231–264 (NTAICKQGCSIEHGSCKVPGNCRCLYGWQGEYCD). The EGF-like 2; atypical domain maps to 265–295 (QCIPHPGCVHGTCIEPWQCLCDTNWGGQLCD). EGF-like domains are found at residues 297–335 (DLNTCGTLQPCLNGGTCSNTGPDKYHCACPDGYSGQNCE) and 337–373 (ADNACLSEPCLNGGLCVESSLGFECQCAAGWTGPSCN). One can recognise an EGF-like 5; calcium-binding domain in the interval 375–411 (NEDDCSPNPCNHSGVCVDLVDGFKCICPVQWTGKTCL). Asparagine 385 is a glycosylation site (N-linked (GlcNAc...) asparagine). Residues 413–449 (DANECEESPCVNAHSCRNLIGGYFCECLPGWTGQNCD) form the EGF-like 6; calcium-binding domain. Positions 451–486 (NVNDCHGQCLNGGLCKDLVNGYRCVCAAGFAGDRCE) constitute an EGF-like 7; calcium-binding domain. Residues 488–524 (DVDECASRPCLNGGRCQDTLNGFQCLCPPGFSGATCQ) form the EGF-like 8; calcium-binding domain. EGF-like domains are found at residues 526–562 (DLDYCESGPCQNGAQCFSLASDYYCKCPEDYEGKNCS) and 575–630 (VIDS…TYCH). Asparagine 560 is a glycosylation site (N-linked (GlcNAc...) asparagine). The region spanning 632 to 668 (NINDCESSPCLSGGTCIDKINAYQCICADGWEGPNCE) is the EGF-like 11; calcium-binding domain. The 37-residue stretch at 670–706 (NIDDCRTNPCRDRGVCRDLVNDFYCECENGWKGKTCH) folds into the EGF-like 12; calcium-binding domain. EGF-like domains lie at 708–744 (RESQCDEDTCNNGGTCSDEGDSFKCLCSPGWEGATCN) and 747–783 (KNSSCLPNPCENGATCVVTGDGFTCVCKEGWEGPTCS). Asparagine 748 is a glycosylation site (N-linked (GlcNAc...) asparagine). 9 cysteine pairs are disulfide-bonded: cysteine 751–cysteine 762, cysteine 756–cysteine 771, cysteine 773–cysteine 782, cysteine 789–cysteine 800, cysteine 794–cysteine 809, cysteine 811–cysteine 820, cysteine 827–cysteine 838, cysteine 832–cysteine 847, and cysteine 849–cysteine 858. The 37-residue stretch at 785–821 (NSNDCNPQPCYNSGTCVDGDNWYRCECASGFAGPDCR) folds into the EGF-like 15; calcium-binding domain. The 37-residue stretch at 823-859 (NINECQSSPCAFGSTCVDEINGYRCLCPPGRTGPRCQ) folds into the EGF-like 16; calcium-binding domain. One can recognise an EGF-like 17 domain in the interval 917-959 (TGQLCVPVRDEQCFVKPCSSQGECWSAHRPAVRTHCQPDSHCA). Residues asparagine 960, asparagine 991, and asparagine 1046 are each glycosylated (N-linked (GlcNAc...) asparagine). Residues 1071-1095 (MVPLLVSVVTAIWVLALASVFLWCI) traverse the membrane as a helical segment. The Cytoplasmic segment spans residues 1096 to 1242 (RHHRKQSSSA…HSLQKMEYIV (147 aa)). Residues 1191–1242 (RDDRLSSNGTDIKKHPQWTNKRDNRDLESQHRVPDSQHRDSQHSLQKMEYIV) form a disordered region. A compositionally biased stretch (basic and acidic residues) spans 1210–1232 (NKRDNRDLESQHRVPDSQHRDSQ).

Its subcellular location is the membrane. It is found in the cell membrane. Ligand for multiple Notch receptors and involved in the mediation of Notch signaling. Seems to be involved in cell-fate decisions. The polypeptide is Protein jagged-1a (jag1a) (Danio rerio (Zebrafish)).